The following is a 122-amino-acid chain: Holo-[acyl-carrier-protein] synthase (122 aa).

Positions 8 and 57 each coordinate Mg(2+).

It belongs to the P-Pant transferase superfamily. AcpS family. It depends on Mg(2+) as a cofactor.

It localises to the cytoplasm. It catalyses the reaction apo-[ACP] + CoA = holo-[ACP] + adenosine 3',5'-bisphosphate + H(+). Transfers the 4'-phosphopantetheine moiety from coenzyme A to a Ser of acyl-carrier-protein. The chain is Holo-[acyl-carrier-protein] synthase from Protochlamydia amoebophila (strain UWE25).